We begin with the raw amino-acid sequence, 638 residues long: MAFRKSNVYLSLVNSYIIDSPQPSSINYWWNMGSLLGLCLVIQIVTGIFMAMHYSSNIELAFSSVEHIMRDVHNGYILRYLHANGASFFFMVMFMHMAKGLYYGSYRSPRVTLWNVGVIIFILTIATAFLGYCCVYGQMSHWGATVITNLFSAIPFVGNDIVSWLWGGFSVSNPTIQRFFALHYLVPFIIAAMVIMHLMALHIHGSSNPLGITGNLDRIPMHSYFIFKDLVTVFLFMLILALFVFYSPNTLGQNMALLLITYVINILCAVCWKSLFIKYQWKIYNKTTYYFIIQNILNTKQLNNFVLKFNWTKQYNKMNIVSDLFNPNRVKYYYKEDNQQVTNMNSSNTHLTSNKKNLLVDTSETTRTTKNKFNYLLNIFNMKKMNQIITKRHYSIYKDSNIRFNQWLAGLIDGDGYFCITKNKYASCEITVELKDEKMLRQIQDKFGGSVKLRSGVKAIRYRLQNKEGMIKLINAVNGNIRNSKRLVQFNKVCILLNIDFKEPIKLTKDNAWFMGFFDADGTINYYYSGKLKIRPQLTISVTNKYLHDVEYYREVFGGNIYFDKAKNGYFKWSINNKELHNIFYTYNKSCPSKSNKGKRLFLIDKFYYLYDLLAFKAPHNTALYKAWLKFNEKWNNN.

Residues 1–253 (MAFRKSNVYL…VFYSPNTLGQ (253 aa)) are COB exons 1 to 4 encoded. The interval 253–638 (QNMALLLITY…LKFNEKWNNN (386 aa)) is COB intron 4 encoded.

The protein in the C-terminal section; belongs to the LAGLIDADG endonuclease family. Forms a ternary complex with intron derived RNA and the imported mitochondrial leucyl-tRNA synthetase NAM2. The proteins do not interact directly with each other. The mature protein may arise from proteolytic cleavage of an in-frame translation of COB exons 1 to 4 plus intron 4, containing the bI4 open reading frame. Cleavage would take place close to the Met-385 resulting in an active maturase of about 30 kDa.

The protein localises to the mitochondrion. Mitochondrial mRNA maturase required for splicing of intron 4 of the cytochrome b (COB) gene, containing its own coding sequence, and intron 4 in COX1, coding for the related homing endonuclease aI4. In vivo splicing requires in addition the imported mitochondrial leucyl-tRNA synthetase NAM2. Both proteins seem to stimulate the intrinsic ribozyme activity of intron bI4 through binding to and stabilizing specific secondary and tertiary structure elements in the RNA. The protein is Intron-encoded RNA maturase bI4 (BI4) of Saccharomyces cerevisiae (strain ATCC 204508 / S288c) (Baker's yeast).